We begin with the raw amino-acid sequence, 348 residues long: Phosphate acyltransferase (348 aa).

This sequence belongs to the PlsX family. Homodimer. Probably interacts with PlsY.

It localises to the cytoplasm. The catalysed reaction is a fatty acyl-[ACP] + phosphate = an acyl phosphate + holo-[ACP]. The protein operates within lipid metabolism; phospholipid metabolism. Catalyzes the reversible formation of acyl-phosphate (acyl-PO(4)) from acyl-[acyl-carrier-protein] (acyl-ACP). This enzyme utilizes acyl-ACP as fatty acyl donor, but not acyl-CoA. This chain is Phosphate acyltransferase, found in Pectobacterium atrosepticum (strain SCRI 1043 / ATCC BAA-672) (Erwinia carotovora subsp. atroseptica).